The chain runs to 430 residues: Immunoglobulin heavy constant delta (430 aa).

The Extracellular portion of the chain corresponds to 1–406; that stretch reads APTKAPDVFP…FDDVGSLWTT (406 aa). Residues 6 to 98 enclose the Ig-like 1 domain; it reads PDVFPIISGC…TASKSKKEIF (93 aa). Cysteines 28 and 84 form a disulfide. The segment at 96-167 is disordered; the sequence is EIFRWPESPK…TPECPSHTQP (72 aa). Residues 106-118 show a composition bias toward polar residues; it reads AQASSVPTAQPQA. 2 O-linked (GalNAc...) serine glycosylation sites follow: S109 and S110. O-linked (GalNAc...) threonine glycosylation is found at T113, T126, T127, T131, and T132. Positions 138–158 are enriched in basic and acidic residues; that stretch reads GGEEKKKEKEKEEQEERETKT. Ig-like domains follow at residues 175–263 and 267–373; these read PAVQ…RLMA and PAAQ…RSLE. 2 disulfide bridges follow: C190-C249 and C294-C355. 3 N-linked (GlcNAc...) asparagine glycosylation sites follow: N225, N316, and N367. A helical membrane pass occupies residues 407-427; the sequence is LSTFVALFILTLLYSGIVTFI. Residues 428–430 are Cytoplasmic-facing; the sequence is KVK.

In terms of assembly, immunoglobulins are composed of two identical heavy chains and two identical light chains; disulfide-linked. An IgD molecule contains thus a delta heavy chain combined with either a kappa or a lambda light chains. Kappa light chains are found predominantly on the membrane IgD (mIgD) form and lambda on the secreted IgD (sIgD) form, this fact is poorly understood. Membrane-bound IgD molecules are non-covalently associated with a heterodimer of CD79A and CD79B.

It localises to the secreted. The protein localises to the cell membrane. Its function is as follows. Constant region of immunoglobulin heavy chains. Immunoglobulins, also known as antibodies, are membrane-bound or secreted glycoproteins produced by B lymphocytes. In the recognition phase of humoral immunity, the membrane-bound immunoglobulins serve as receptors which, upon binding of a specific antigen, trigger the clonal expansion and differentiation of B lymphocytes into immunoglobulins-secreting plasma cells. Secreted immunoglobulins mediate the effector phase of humoral immunity, which results in the elimination of bound antigens. The antigen binding site is formed by the variable domain of one heavy chain, together with that of its associated light chain. Thus, each immunoglobulin has two antigen binding sites with remarkable affinity for a particular antigen. The variable domains are assembled by a process called V-(D)-J rearrangement and can then be subjected to somatic hypermutations which, after exposure to antigen and selection, allow affinity maturation for a particular antigen. IgD is the major antigen receptor isotype on the surface of most peripheral B-cells, where it is coexpressed with IgM. The membrane-bound IgD (mIgD) induces the phosphorylation of CD79A and CD79B by the Src family of protein tyrosine kinases. Soluble IgD (sIgD) concentration in serum below those of IgG, IgA, and IgM but much higher than that of IgE. IgM and IgD molecules present on B cells have identical V regions and antigen-binding sites. After the antigen binds to the B-cell receptor, the secreted form sIgD is shut off. IgD is a potent inducer of TNF, IL1B, and IL1RN. IgD also induces release of IL6, IL10, and LIF from peripheral blood mononuclear cells. Monocytes seem to be the main producers of cytokines in vitro in the presence of IgD. The chain is Immunoglobulin heavy constant delta from Homo sapiens (Human).